The chain runs to 88 residues: DASH complex subunit HSK3 (88 aa).

Positions 1–15 are enriched in low complexity; it reads MSSRGSGANAASRQS. The disordered stretch occupies residues 1 to 24; it reads MSSRGSGANAASRQSMTASGGAVK.

The protein belongs to the DASH complex HSK3 family. In terms of assembly, component of the DASH complex consisting of ASK1, DAD1, DAD2, DAD3, DAD4, DAM1, DUO1, HSK3, SPC19 and SPC34, with a stoichiometry of one copy of each subunit per complex. Multiple DASH complexes oligomerize to form a ring that encircles spindle microtubules and organizes the rod-like NDC80 complexes of the outer kinetochore. DASH complex oligomerization strengthens microtubule attachments. On cytoplasmic microtubules, DASH complexes appear to form patches instead of rings.

Its subcellular location is the nucleus. The protein localises to the cytoplasm. It is found in the cytoskeleton. The protein resides in the spindle. It localises to the chromosome. Its subcellular location is the centromere. The protein localises to the kinetochore. Component of the DASH complex that connects microtubules with kinetochores and couples microtubule depolymerisation to chromosome movement; it is involved in retrieving kinetochores to the spindle poles before their re-orientation on the spindle in early mitosis and allows microtubule depolymerization to pull chromosomes apart and resist detachment during anaphase. Kinetochores, consisting of a centromere-associated inner segment and a microtubule-contacting outer segment, play a crucial role in chromosome segregation by mediating the physical connection between centromeric DNA and microtubules. Kinetochores also serve as an input point for the spindle assembly checkpoint, which delays anaphase until all chromosomes have bioriented on the mitotic spindle. This chain is DASH complex subunit HSK3, found in Chaetomium thermophilum (strain DSM 1495 / CBS 144.50 / IMI 039719) (Thermochaetoides thermophila).